The primary structure comprises 68 residues: Large ribosomal subunit protein uL29 (68 aa).

It belongs to the universal ribosomal protein uL29 family.

This Streptococcus sanguinis (strain SK36) protein is Large ribosomal subunit protein uL29.